Here is a 1154-residue protein sequence, read N- to C-terminus: DNA-directed RNA polymerase subunit beta' (1154 aa).

The Zn(2+) site is built by C60, C62, C75, and C78. Mg(2+) contacts are provided by D449, D451, and D453. Residues C774, C848, C855, and C858 each contribute to the Zn(2+) site.

The protein belongs to the RNA polymerase beta' chain family. As to quaternary structure, the RNAP catalytic core consists of 2 alpha, 1 beta, 1 beta' and 1 omega subunit. When a sigma factor is associated with the core the holoenzyme is formed, which can initiate transcription. It depends on Mg(2+) as a cofactor. Zn(2+) is required as a cofactor.

The catalysed reaction is RNA(n) + a ribonucleoside 5'-triphosphate = RNA(n+1) + diphosphate. Its function is as follows. DNA-dependent RNA polymerase catalyzes the transcription of DNA into RNA using the four ribonucleoside triphosphates as substrates. In Desulforudis audaxviator (strain MP104C), this protein is DNA-directed RNA polymerase subunit beta'.